We begin with the raw amino-acid sequence, 824 residues long: Leucine--tRNA ligase (824 aa).

The 'HIGH' region motif lies at 42–52 (PYPSGRIHMGH). Residues 581-585 (KMSKS) carry the 'KMSKS' region motif. Position 584 (K584) interacts with ATP.

Belongs to the class-I aminoacyl-tRNA synthetase family.

It is found in the cytoplasm. It carries out the reaction tRNA(Leu) + L-leucine + ATP = L-leucyl-tRNA(Leu) + AMP + diphosphate. The sequence is that of Leucine--tRNA ligase from Geotalea uraniireducens (strain Rf4) (Geobacter uraniireducens).